A 110-amino-acid polypeptide reads, in one-letter code: Eukaryotic translation initiation factor eIF1 (110 aa).

At T40 the chain carries Phosphothreonine.

It belongs to the SUI1 family.

Probably involved in translation. The polypeptide is Eukaryotic translation initiation factor eIF1 (Drosophila melanogaster (Fruit fly)).